A 491-amino-acid polypeptide reads, in one-letter code: Glutamyl-tRNA(Gln) amidotransferase subunit A (491 aa).

Catalysis depends on charge relay system residues Lys79 and Ser154. The active-site Acyl-ester intermediate is the Ser178.

This sequence belongs to the amidase family. GatA subfamily. In terms of assembly, heterotrimer of A, B and C subunits.

The catalysed reaction is L-glutamyl-tRNA(Gln) + L-glutamine + ATP + H2O = L-glutaminyl-tRNA(Gln) + L-glutamate + ADP + phosphate + H(+). Allows the formation of correctly charged Gln-tRNA(Gln) through the transamidation of misacylated Glu-tRNA(Gln) in organisms which lack glutaminyl-tRNA synthetase. The reaction takes place in the presence of glutamine and ATP through an activated gamma-phospho-Glu-tRNA(Gln). The sequence is that of Glutamyl-tRNA(Gln) amidotransferase subunit A from Synechococcus sp. (strain CC9605).